The sequence spans 400 residues: Argininosuccinate synthase (400 aa).

8 to 16 (AYSGGLDTS) provides a ligand contact to ATP. Y87 is a binding site for L-citrulline. G117 is an ATP binding site. Residues T119, N123, and D124 each contribute to the L-aspartate site. An L-citrulline-binding site is contributed by N123. Residues R127, S175, E260, and Y272 each contribute to the L-citrulline site.

This sequence belongs to the argininosuccinate synthase family. Type 1 subfamily. As to quaternary structure, homotetramer.

The protein localises to the cytoplasm. The catalysed reaction is L-citrulline + L-aspartate + ATP = 2-(N(omega)-L-arginino)succinate + AMP + diphosphate + H(+). It participates in amino-acid biosynthesis; L-arginine biosynthesis; L-arginine from L-ornithine and carbamoyl phosphate: step 2/3. The sequence is that of Argininosuccinate synthase from Mycolicibacterium vanbaalenii (strain DSM 7251 / JCM 13017 / BCRC 16820 / KCTC 9966 / NRRL B-24157 / PYR-1) (Mycobacterium vanbaalenii).